A 380-amino-acid polypeptide reads, in one-letter code: Cobalt-precorrin-5B C(1)-methyltransferase (380 aa).

Belongs to the CbiD family.

The catalysed reaction is Co-precorrin-5B + S-adenosyl-L-methionine = Co-precorrin-6A + S-adenosyl-L-homocysteine. The protein operates within cofactor biosynthesis; adenosylcobalamin biosynthesis; cob(II)yrinate a,c-diamide from sirohydrochlorin (anaerobic route): step 6/10. Catalyzes the methylation of C-1 in cobalt-precorrin-5B to form cobalt-precorrin-6A. The chain is Cobalt-precorrin-5B C(1)-methyltransferase from Methanosphaera stadtmanae (strain ATCC 43021 / DSM 3091 / JCM 11832 / MCB-3).